The primary structure comprises 1407 residues: DNA-directed RNA polymerase subunit beta' (1407 aa).

Residues C70, C72, C85, and C88 each contribute to the Zn(2+) site. The Mg(2+) site is built by D460, D462, and D464. 4 residues coordinate Zn(2+): C814, C888, C895, and C898.

Belongs to the RNA polymerase beta' chain family. In terms of assembly, the RNAP catalytic core consists of 2 alpha, 1 beta, 1 beta' and 1 omega subunit. When a sigma factor is associated with the core the holoenzyme is formed, which can initiate transcription. Requires Mg(2+) as cofactor. Zn(2+) serves as cofactor.

It carries out the reaction RNA(n) + a ribonucleoside 5'-triphosphate = RNA(n+1) + diphosphate. DNA-dependent RNA polymerase catalyzes the transcription of DNA into RNA using the four ribonucleoside triphosphates as substrates. In Salmonella paratyphi B (strain ATCC BAA-1250 / SPB7), this protein is DNA-directed RNA polymerase subunit beta'.